Reading from the N-terminus, the 333-residue chain is NADH-quinone oxidoreductase subunit H (333 aa).

8 helical membrane-spanning segments follow: residues 15–35, 88–108, 117–137, 159–179, 191–211, 239–259, 274–296, and 313–333; these read FFIFFGLAVLLLFAVLGFVTY, FILAPVIAFAPAFMVLAVIPF, IGVGLLYYIAVSGITTIGVVT, ISYEIPLVMSVIGIVLLAGSL, VWYIFVQPVGFVVFLIAAVAE, WAFFMLSEYVYFFGMASLITV, IPGAVWFALKFSSVVFLLIWFRV, and VLLPIALANIFLTALIKELFF.

The protein belongs to the complex I subunit 1 family. As to quaternary structure, NDH-1 is composed of 14 different subunits. Subunits NuoA, H, J, K, L, M, N constitute the membrane sector of the complex.

It is found in the cell membrane. The catalysed reaction is a quinone + NADH + 5 H(+)(in) = a quinol + NAD(+) + 4 H(+)(out). NDH-1 shuttles electrons from NADH, via FMN and iron-sulfur (Fe-S) centers, to quinones in the respiratory chain. The immediate electron acceptor for the enzyme in this species is believed to be ubiquinone. Couples the redox reaction to proton translocation (for every two electrons transferred, four hydrogen ions are translocated across the cytoplasmic membrane), and thus conserves the redox energy in a proton gradient. This subunit may bind ubiquinone. This chain is NADH-quinone oxidoreductase subunit H, found in Bacillus thuringiensis subsp. konkukian (strain 97-27).